A 499-amino-acid polypeptide reads, in one-letter code: MPSGVFQKRPKAAETISLFCMILIRLSRAADDSHETSTLLATITTITTEIIPMPDSGRSCFGWSSAPEAAGGNCSRSNRNGTLKCYGGMNNLAALNQSGKLSRVQPALEMLLCGWPKDGLNHFRDLQKLPRLRSLTIEYSGFTEFKFDFPEMLELHTINISWTNLSYISSRTFKRVHPLKVLDLRWNQLIQLDGPLLLPRNFEQLYLAGNPWNCTRNFKWLLLQPEKGRLVVDRDELICTDRKYKERQMLMVMHYKLELKRQCQSHEDLRNCTCLMHHILPKTHIPLYTVNCSHLQFHRLPDFLPDNTTTLVINDNMISDINPLRDNPHYRHVVDMQLENNQISNVDNLEDTYWLQNFRLLNLRGNNLRKLHVYALDNALDDNENANLLLLSRNPWHCTCKFGSRMRELLTKYKDIVRDAWNVSCTYRLDDDQLLAKVLTLSRQEMCNLSVEGGTQIHPIDWLNGVLASLIFLILGKLAYDYYYYKYYGRVPWIVMKMP.

The signal sequence occupies residues 1-29 (MPSGVFQKRPKAAETISLFCMILIRLSRA). LRR repeat units lie at residues 154 to 175 (ELHTINISWTNLSYISSRTFKR) and 178 to 199 (PLKVLDLRWNQLIQLDGPLLLP). The 56-residue stretch at 210–265 (NPWNCTRNFKWLLLQPEKGRLVVDRDELICTDRKYKERQMLMVMHYKLELKRQCQS) folds into the LRRCT 1 domain. LRR repeat units lie at residues 307–328 (NTTTLVINDNMISDINPLRDNP), 332–353 (HVVDMQLENNQISNVDNLEDTY), and 357–378 (NFRLLNLRGNNLRKLHVYALDN). Positions 394-449 (NPWHCTCKFGSRMRELLTKYKDIVRDAWNVSCTYRLDDDQLLAKVLTLSRQEMCNL) constitute an LRRCT 2 domain.

In terms of biological role, has a role in the ecdysone induced cascade; probably indirect control of 'late' ecdysone genes. The chain is Protein singed wings 2 from Drosophila melanogaster (Fruit fly).